Here is an 860-residue protein sequence, read N- to C-terminus: Linoleate 9S-lipoxygenase A (860 aa).

The PLAT domain maps to 29-159; the sequence is NALDFTDLAG…RYKSDRIFFA (131 aa). In terms of domain architecture, Lipoxygenase spans 162–860; that stretch reads PYLPSETPEL…GKGIPNSVSI (699 aa). A disordered region spans residues 209 to 246; the sequence is PDQGKENVRTTLGGSADYPYPRRGRTGRPPTRTDPKSE. The Fe cation site is built by histidine 521, histidine 526, histidine 712, asparagine 716, and isoleucine 860.

This sequence belongs to the lipoxygenase family. Monomer. Fe cation is required as a cofactor. As to expression, expressed in germinating seeds as well as in ripening fruit.

The protein resides in the cytoplasm. It carries out the reaction (9Z,12Z)-octadecadienoate + O2 = (9S)-hydroperoxy-(10E,12Z)-octadecadienoate. Its pathway is lipid metabolism; oxylipin biosynthesis. Its function is as follows. Plant lipoxygenase may be involved in a number of diverse aspects of plant physiology including growth and development, pest resistance, and senescence or responses to wounding. It catalyzes the hydroperoxidation of lipids containing a cis,cis-1,4-pentadiene structure. The sequence is that of Linoleate 9S-lipoxygenase A (LOX1.1) from Solanum lycopersicum (Tomato).